The chain runs to 132 residues: Cytochrome b5 (132 aa).

The region spanning 2–78 (GKIFTLAEVA…LDEYYVGDID (77 aa)) is the Cytochrome b5 heme-binding domain. Positions 37 and 61 each coordinate heme. A helical membrane pass occupies residues 104-124 (FVIKLLQFLVPLVILAGAIGI).

The protein belongs to the cytochrome b5 family.

It localises to the endoplasmic reticulum membrane. The protein localises to the microsome membrane. In terms of biological role, membrane bound hemoprotein which function as an electron carrier for several membrane bound oxygenases. This chain is Cytochrome b5, found in Borago officinalis (Bourrache).